A 923-amino-acid chain; its full sequence is Isoleucine--tRNA ligase (923 aa).

Residues 57 to 67 (PYANGHIHIGH) carry the 'HIGH' region motif. Residue Glu560 participates in L-isoleucyl-5'-AMP binding. Positions 601 to 605 (KMSKS) match the 'KMSKS' region motif. An ATP-binding site is contributed by Lys604. Residues Cys895, Cys898, Cys915, and Cys918 each coordinate Zn(2+).

It belongs to the class-I aminoacyl-tRNA synthetase family. IleS type 1 subfamily. Monomer. Zn(2+) is required as a cofactor.

It localises to the cytoplasm. The enzyme catalyses tRNA(Ile) + L-isoleucine + ATP = L-isoleucyl-tRNA(Ile) + AMP + diphosphate. In terms of biological role, catalyzes the attachment of isoleucine to tRNA(Ile). As IleRS can inadvertently accommodate and process structurally similar amino acids such as valine, to avoid such errors it has two additional distinct tRNA(Ile)-dependent editing activities. One activity is designated as 'pretransfer' editing and involves the hydrolysis of activated Val-AMP. The other activity is designated 'posttransfer' editing and involves deacylation of mischarged Val-tRNA(Ile). The chain is Isoleucine--tRNA ligase from Geobacter sulfurreducens (strain ATCC 51573 / DSM 12127 / PCA).